The chain runs to 175 residues: NADH-ubiquinone oxidoreductase chain 6 (175 aa).

6 consecutive transmembrane segments (helical) span residues 1–21 (MMYI…GFSS), 24–44 (SPVY…GIIM), 51–71 (LGLV…GYTI), 87–107 (VVLS…VWLF), 112–132 (ELVG…EGGF), and 148–168 (CGFW…FIAT).

This sequence belongs to the complex I subunit 6 family. As to quaternary structure, core subunit of respiratory chain NADH dehydrogenase (Complex I) which is composed of 45 different subunits.

It localises to the mitochondrion inner membrane. The catalysed reaction is a ubiquinone + NADH + 5 H(+)(in) = a ubiquinol + NAD(+) + 4 H(+)(out). In terms of biological role, core subunit of the mitochondrial membrane respiratory chain NADH dehydrogenase (Complex I) which catalyzes electron transfer from NADH through the respiratory chain, using ubiquinone as an electron acceptor. Essential for the catalytic activity and assembly of complex I. The protein is NADH-ubiquinone oxidoreductase chain 6 (MT-ND6) of Elephas maximus (Indian elephant).